Here is a 56-residue protein sequence, read N- to C-terminus: Ribosome modulation factor (56 aa).

This sequence belongs to the ribosome modulation factor family.

Its subcellular location is the cytoplasm. Its function is as follows. During stationary phase, converts 70S ribosomes to an inactive dimeric form (100S ribosomes). This Proteus mirabilis (strain HI4320) protein is Ribosome modulation factor.